The chain runs to 218 residues: Probable glutamine ABC transporter permease protein GlnP (218 aa).

A run of 3 helical transmembrane segments spans residues 19–39 (FLVT…FGLI), 65–85 (LPLL…GIKL), and 188–208 (FFPI…SLSL). The region spanning 19-210 (FLVTLYVAFI…AVNYSLSLAA (192 aa)) is the ABC transmembrane type-1 domain.

The protein belongs to the binding-protein-dependent transport system permease family. In terms of assembly, the complex is composed of two ATP-binding proteins (GlnQ), two transmembrane proteins (GlnM and GlnP) and a solute-binding protein (GlnH).

It localises to the cell membrane. Its function is as follows. Part of the ABC transporter complex GlnHMPQ involved in glutamine transport. Probably responsible for the translocation of the substrate across the membrane. This is Probable glutamine ABC transporter permease protein GlnP (glnP) from Bacillus subtilis (strain 168).